The sequence spans 158 residues: Transcription elongation factor GreA (158 aa).

Residues 45-73 adopt a coiled-coil conformation; that stretch reads AEYHAAREQQSFIEGRIKQLESELSHAEI.

The protein belongs to the GreA/GreB family.

In terms of biological role, necessary for efficient RNA polymerase transcription elongation past template-encoded arresting sites. The arresting sites in DNA have the property of trapping a certain fraction of elongating RNA polymerases that pass through, resulting in locked ternary complexes. Cleavage of the nascent transcript by cleavage factors such as GreA or GreB allows the resumption of elongation from the new 3'terminus. GreA releases sequences of 2 to 3 nucleotides. The protein is Transcription elongation factor GreA of Xanthomonas axonopodis pv. citri (strain 306).